A 107-amino-acid chain; its full sequence is Protein HitA (107 aa).

The HIT domain occupies 5–107 (IFCKIAAKEI…LHIHIMGTPV (103 aa)). The Histidine triad motif motif lies at 97 to 101 (HLHIH).

The chain is Protein HitA (hitA) from Neisseria gonorrhoeae.